The sequence spans 913 residues: Pentatricopeptide repeat-containing protein At1g10270 (913 aa).

Residues 34–138 (SLSPANEDPE…PNAPRLPDST (105 aa)) are disordered. Polar residues predominate over residues 64-73 (DPSQFQIPQN). A compositionally biased stretch (pro residues) spans 74–84 (HTPPIPYPPIP). The Nuclear localization signal signature appears at 99-108 (ERRRRKRRLR). A compositionally biased stretch (basic and acidic residues) spans 108-130 (RIEPPLHALRRDPSAPPPKRDPN). A leucine-zipper region spans residues 134–167 (LPDSTSALVGQRLNLHNRVQSLIRASDLDAASKL). PPR repeat units lie at residues 179–214 (TVFT…NIVP), 215–250 (NVVS…PFAP), 251–285 (SSVT…GQAA), 286–316 (DSTV…LKSK), 321–355 (DGIV…KFRM), 356–390 (HPPT…HAPP), 396–426 (NSDT…VGSK), 435–469 (DYLG…SLPA), 470–504 (DAPS…NLRV), 505–539 (VADF…EPKP), and 540–574 (DPSI…NVGV). The disordered stretch occupies residues 607-913 (RNAGQSGNTP…QEKKVVELRN (307 aa)). Residues 639–649 (WTSQGVVHSNS) show a composition bias toward polar residues. Composition is skewed to low complexity over residues 650 to 666 (GWAN…AYKA) and 673 to 690 (SWSN…SNQT). The interval 674-858 (WSNTSDNQQQ…TAQQQWSNQT (185 aa)) is 14 X 11 AA approximate tandem repeats of W-x(2)-Q-x(4)-Q-x(2). The segment covering 691–700 (AGQQPPSWSR) has biased composition (polar residues). Residues 706–727 (QQQQSWSQQSGWSSPSGHQQSW) are compositionally biased toward low complexity. Residues 728-761 (TNQTAGQQQPWANQTPGQQQQWANQTPGQQQQLA) are compositionally biased toward polar residues. Low complexity predominate over residues 762–791 (NQTPGQQQQWANQTPGQQQQWANQNNGHQQ). The span at 792–814 (PWANQNTGHQQSWANQTPSQQQP) shows a compositional bias: polar residues. Residues 815–845 (WANQTTGQQQGWGNQTTGQQQQWANQTAGQQ) show a composition bias toward low complexity. Polar residues-rich tracts occupy residues 846–867 (SGWT…SQWL) and 875–894 (ANQT…QQEP). The segment covering 899–913 (ECQETQEKKVVELRN) has biased composition (basic and acidic residues).

It belongs to the PPR family. P subfamily. Interacts with RPB36B through its WQQ domain. As to expression, ubiquitous but preferentially expressed in gametophytes and young embryos.

It localises to the nucleus. Its function is as follows. May function as a transcriptional regulator essential for early embryogenesis. The polypeptide is Pentatricopeptide repeat-containing protein At1g10270 (GRP23) (Arabidopsis thaliana (Mouse-ear cress)).